The chain runs to 291 residues: MIQGSIVALATPMEPDGRLDVPGLRRLVEFHIEQGTDAIVAVGTTGESATLDEEEHTEVIRLVVEQAAGRIPVIAGTGANATTEAIRLTARAKAVGADACLLVTPYYNKPTQEGLYRHYLAVAEAVDIPQILYNVPGRTGCDMLPATVGRLAQVPGIVGIKEATGKLERLAEIRALCPEGFALYSGDDATACEFCLSGGNGVISVTANVAPRLMQEMCRAAIAGDRATAEAINRRLEALHHDLFIESNPIPVKWALHEMGLIQEGIRLPLTWLAASCREAVRQAMRQAGVL.

T45 is a binding site for pyruvate. The Proton donor/acceptor role is filled by Y133. Catalysis depends on K161, which acts as the Schiff-base intermediate with substrate. I203 provides a ligand contact to pyruvate.

This sequence belongs to the DapA family. As to quaternary structure, homotetramer; dimer of dimers.

Its subcellular location is the cytoplasm. It catalyses the reaction L-aspartate 4-semialdehyde + pyruvate = (2S,4S)-4-hydroxy-2,3,4,5-tetrahydrodipicolinate + H2O + H(+). Its pathway is amino-acid biosynthesis; L-lysine biosynthesis via DAP pathway; (S)-tetrahydrodipicolinate from L-aspartate: step 3/4. Functionally, catalyzes the condensation of (S)-aspartate-beta-semialdehyde [(S)-ASA] and pyruvate to 4-hydroxy-tetrahydrodipicolinate (HTPA). This Methylococcus capsulatus (strain ATCC 33009 / NCIMB 11132 / Bath) protein is 4-hydroxy-tetrahydrodipicolinate synthase.